Reading from the N-terminus, the 317-residue chain is tRNA-cytidine(32) 2-sulfurtransferase (317 aa).

Positions 46–51 match the PP-loop motif motif; that stretch reads SGGKDS. Residues Cys121, Cys124, and Cys212 each contribute to the [4Fe-4S] cluster site.

It belongs to the TtcA family. Homodimer. Mg(2+) is required as a cofactor. The cofactor is [4Fe-4S] cluster.

The protein resides in the cytoplasm. It catalyses the reaction cytidine(32) in tRNA + S-sulfanyl-L-cysteinyl-[cysteine desulfurase] + AH2 + ATP = 2-thiocytidine(32) in tRNA + L-cysteinyl-[cysteine desulfurase] + A + AMP + diphosphate + H(+). The protein operates within tRNA modification. In terms of biological role, catalyzes the ATP-dependent 2-thiolation of cytidine in position 32 of tRNA, to form 2-thiocytidine (s(2)C32). The sulfur atoms are provided by the cysteine/cysteine desulfurase (IscS) system. This chain is tRNA-cytidine(32) 2-sulfurtransferase, found in Shewanella loihica (strain ATCC BAA-1088 / PV-4).